A 289-amino-acid chain; its full sequence is Vesicular-fusion protein SEC17 (289 aa).

This sequence belongs to the SNAP family.

It is found in the membrane. Its function is as follows. Required for vesicular transport between the endoplasmic reticulum and the Golgi apparatus. The protein is Vesicular-fusion protein SEC17 (SEC17) of Coprinopsis cinerea (strain Okayama-7 / 130 / ATCC MYA-4618 / FGSC 9003) (Inky cap fungus).